Reading from the N-terminus, the 209-residue chain is Putative 3-methyladenine DNA glycosylase (209 aa).

The protein belongs to the DNA glycosylase MPG family.

The polypeptide is Putative 3-methyladenine DNA glycosylase (Lactiplantibacillus plantarum (strain ATCC BAA-793 / NCIMB 8826 / WCFS1) (Lactobacillus plantarum)).